An 89-amino-acid polypeptide reads, in one-letter code: Barrier-to-autointegration factor (89 aa).

M1 carries the post-translational modification N-acetylmethionine. Position 2 is an N-acetylthreonine; in Barrier-to-autointegration factor, N-terminally processed (T2). Residues T2 and T3 each carry the phosphothreonine; by VRK1 and VRK2 modification. S4 carries the phosphoserine; by VRK1 and VRK2 modification. Positions 20–35 constitute a HhH domain; it reads VGSLAGIGDVLSKRLE.

It belongs to the BAF family. In terms of assembly, homodimer. Heterodimerizes with BANF2. Interacts with ANKLE2/LEM4, leading to decreased phosphorylation by VRK1 and promoting dephosphorylation by protein phosphatase 2A (PP2A). Binds non-specifically to double-stranded DNA, and is found as a hexamer or dodecamer upon DNA binding. Binds to LEM domain-containing nuclear proteins such as LEMD3/MAN1, TMPO/LAP2 and EMD (emerin). Interacts with ANKLE1 (via LEM domain); the interaction may favor BANF1 dimerization. Interacts with CRX and LMNA (lamin-A). Binds linker histone H1.1 and core histones H3. Interacts with LEMD2 (via LEM domain). Interacts with PARP1; interaction takes place in response to oxidative DNA damage. In terms of processing, ser-4 is the major site of phosphorylation as compared to Thr-2 and Thr-3. Phosphorylation on Thr-2; Thr-3 and Ser-4 disrupts its ability to bind DNA and reduces its ability to bind LEM domain-containing proteins. Non phosphorylated BAF seems to enhance binding between EMD and LMNA. Dephosphorylated by protein phosphatase 2A (PP2A) following interaction with ANKLE2/LEM4 during mitotic exit, leading to mitotic nuclear envelope reassembly.

It localises to the nucleus. It is found in the chromosome. The protein localises to the nucleus envelope. The protein resides in the cytoplasm. Non-specific DNA-binding protein that plays key roles in mitotic nuclear reassembly, chromatin organization, DNA damage response, gene expression and intrinsic immunity against foreign DNA. Contains two non-specific double-stranded DNA (dsDNA)-binding sites which promote DNA cross-bridging. Plays a key role in nuclear membrane reformation at the end of mitosis by driving formation of a single nucleus in a spindle-independent manner. Transiently cross-bridges anaphase chromosomes via its ability to bridge distant DNA sites, leading to the formation of a dense chromatin network at the chromosome ensemble surface that limits membranes to the surface. Also acts as a negative regulator of innate immune activation by restricting CGAS activity toward self-DNA upon acute loss of nuclear membrane integrity. Outcompetes CGAS for DNA-binding, thereby preventing CGAS activation and subsequent damaging autoinflammatory responses. Also involved in DNA damage response: interacts with PARP1 in response to oxidative stress, thereby inhibiting the ADP-ribosyltransferase activity of PARP1. Involved in the recognition of exogenous dsDNA in the cytosol: associates with exogenous dsDNA immediately after its appearance in the cytosol at endosome breakdown and is required to avoid autophagy. This Mus musculus (Mouse) protein is Barrier-to-autointegration factor.